The primary structure comprises 114 residues: Iron-sulfur cluster insertion protein ErpA (114 aa).

Iron-sulfur cluster-binding residues include C42, C106, and C108.

Belongs to the HesB/IscA family. In terms of assembly, homodimer. Requires iron-sulfur cluster as cofactor.

Required for insertion of 4Fe-4S clusters for at least IspG. In Yersinia enterocolitica serotype O:8 / biotype 1B (strain NCTC 13174 / 8081), this protein is Iron-sulfur cluster insertion protein ErpA.